Here is a 160-residue protein sequence, read N- to C-terminus: Deoxyuridine 5'-triphosphate nucleotidohydrolase (160 aa).

Substrate is bound by residues 79-81, asparagine 92, 96-98, and lysine 106; these read RSG and TVD.

The protein belongs to the dUTPase family. Mg(2+) serves as cofactor.

The enzyme catalyses dUTP + H2O = dUMP + diphosphate + H(+). Its pathway is pyrimidine metabolism; dUMP biosynthesis; dUMP from dCTP (dUTP route): step 2/2. In terms of biological role, this enzyme is involved in nucleotide metabolism: it produces dUMP, the immediate precursor of thymidine nucleotides and it decreases the intracellular concentration of dUTP so that uracil cannot be incorporated into DNA. The polypeptide is Deoxyuridine 5'-triphosphate nucleotidohydrolase (Sinorhizobium medicae (strain WSM419) (Ensifer medicae)).